We begin with the raw amino-acid sequence, 1194 residues long: DNA polymerase catalytic subunit (1194 aa).

Belongs to the DNA polymerase type-B family. Forms a complex with the ssDNA-binding protein, the DNA polymerase processivity factor, and the alkaline exonuclease. Interacts with the helicase-primase complex composed of the primase, the helicase and the primase-associated factor; this interaction may coordinate leading and lagging strand DNA synthesis at the replication fork.

The protein localises to the host nucleus. The enzyme catalyses DNA(n) + a 2'-deoxyribonucleoside 5'-triphosphate = DNA(n+1) + diphosphate. It catalyses the reaction Endonucleolytic cleavage to 5'-phosphomonoester.. In terms of biological role, replicates viral genomic DNA. The replication complex is composed of six viral proteins: the DNA polymerase, processivity factor, primase, primase-associated factor, helicase, and ssDNA-binding protein. Additionally, the polymerase contains an intrinsic ribonuclease H (RNase H) activity that specifically degrades RNA/DNA heteroduplexes or duplex DNA substrates in the 5' to 3' direction. Therefore, it can catalyze the excision of the RNA primers that initiate the synthesis of Okazaki fragments at a replication fork during viral DNA replication. This Varicella-zoster virus (strain Dumas) (HHV-3) protein is DNA polymerase catalytic subunit.